The following is a 46-amino-acid chain: Protein krueppel (46 aa).

3 consecutive C2H2-type zinc fingers follow at residues 1–4, 10–32, and 38–46; these read MRLH, YHCTHCERQFVQVANLRRHLRVH, and YACELCTSK.

It belongs to the krueppel C2H2-type zinc-finger protein family.

Its subcellular location is the nucleus. Functionally, krueppel is a gap class segmentation protein. The polypeptide is Protein krueppel (Kr) (Lithobius forficatus (Centipede)).